We begin with the raw amino-acid sequence, 365 residues long: Tubulin-like protein CetZ (365 aa).

GTP contacts are provided by residues 10-14 (QCGTK), 103-105 (GTG), Glu136, Asn163, and Asn181.

The protein belongs to the CetZ family.

The protein resides in the cytoplasm. Functionally, involved in cell shape control. The protein is Tubulin-like protein CetZ of Pyrococcus horikoshii (strain ATCC 700860 / DSM 12428 / JCM 9974 / NBRC 100139 / OT-3).